We begin with the raw amino-acid sequence, 363 residues long: Probable transglycosylase BTH_I0986 (363 aa).

Belongs to the glycosyltransferase group 1 family. Glycosyltransferase 4 subfamily.

Functionally, probably a transglycosylase. Probably involved in synthesis of the outer membrane receptor for a cellular contact-dependent growth inhibition (CDI) system. The sequence is that of Probable transglycosylase BTH_I0986 from Burkholderia thailandensis (strain ATCC 700388 / DSM 13276 / CCUG 48851 / CIP 106301 / E264).